Reading from the N-terminus, the 342-residue chain is Anthranilate phosphoribosyltransferase (342 aa).

5-phospho-alpha-D-ribose 1-diphosphate-binding positions include Gly-81, 84 to 85, 91 to 94, 109 to 117, and Ser-121; these read GD, NVSS, and KHGNRGVSS. Anthranilate is bound at residue Gly-81. Ser-93 serves as a coordination point for Mg(2+). Asn-112 is an anthranilate binding site. Position 167 (Arg-167) interacts with anthranilate. Asp-226 and Glu-227 together coordinate Mg(2+).

It belongs to the anthranilate phosphoribosyltransferase family. Homodimer. Requires Mg(2+) as cofactor.

It carries out the reaction N-(5-phospho-beta-D-ribosyl)anthranilate + diphosphate = 5-phospho-alpha-D-ribose 1-diphosphate + anthranilate. The protein operates within amino-acid biosynthesis; L-tryptophan biosynthesis; L-tryptophan from chorismate: step 2/5. Its function is as follows. Catalyzes the transfer of the phosphoribosyl group of 5-phosphorylribose-1-pyrophosphate (PRPP) to anthranilate to yield N-(5'-phosphoribosyl)-anthranilate (PRA). The protein is Anthranilate phosphoribosyltransferase of Marinobacter nauticus (strain ATCC 700491 / DSM 11845 / VT8) (Marinobacter aquaeolei).